Here is a 193-residue protein sequence, read N- to C-terminus: MSEKSIVREAKDIRLAMELITLGARLQMLESETQLSRGRLIKLYKELRGSPPPKGMLPFSTDWFMTWEQNIHSSMFYNAYRFLLKSGGSVGIEAVVKAYRLYLEQCPPVKDQEPILALTRAWTLVRFVESGMLQLSVCTKCNGSFITHAHQPASNYVCSLCQPPSRAIKKRKLSANPADINLQLLDGLEQFRM.

Zn(2+) contacts are provided by cysteine 138, cysteine 141, cysteine 158, and cysteine 161.

This sequence belongs to the FlhC family. As to quaternary structure, heterohexamer composed of two FlhC and four FlhD subunits. Each FlhC binds a FlhD dimer, forming a heterotrimer, and a hexamer assembles by dimerization of two heterotrimers. It depends on Zn(2+) as a cofactor.

The protein resides in the cytoplasm. Its function is as follows. Functions in complex with FlhD as a master transcriptional regulator that regulates transcription of several flagellar and non-flagellar operons by binding to their promoter region. Activates expression of class 2 flagellar genes, including fliA, which is a flagellum-specific sigma factor that turns on the class 3 genes. Also regulates genes whose products function in a variety of physiological pathways. This is Flagellar transcriptional regulator FlhC from Proteus mirabilis.